The primary structure comprises 441 residues: Growth/differentiation factor 9 (441 aa).

The first 29 residues, 1-29, serve as a signal peptide directing secretion; sequence MALPSNFLLGVCCFAWLCFLSSLSSQAST. Residues 30 to 306 constitute a propeptide that is removed on maturation; the sequence is EESQSGASEN…EVERSPRRRR (277 aa). N-linked (GlcNAc...) asparagine glycans are attached at residues Asn-163, Asn-229, Asn-258, and Asn-325. Cystine bridges form between Cys-340–Cys-406, Cys-369–Cys-438, and Cys-373–Cys-440.

This sequence belongs to the TGF-beta family. In terms of assembly, homodimer or heterodimer (Potential). But, in contrast to other members of this family, cannot be disulfide-linked. Phosphorylated; phosphorylation is critical for GDF9 function. Ovary. Strongly expressed in germinal vesicle (GV) stage oocytes, MII-stage oocytes and in zygotes.

The protein localises to the secreted. Required for ovarian folliculogenesis. The sequence is that of Growth/differentiation factor 9 (Gdf9) from Mus musculus (Mouse).